Reading from the N-terminus, the 459-residue chain is RuvB-like helicase 1 (459 aa).

75 to 82 contributes to the ATP binding site; it reads GGPSTGKT.

This sequence belongs to the RuvB family. May form heterododecamers with RVB2. Component of the SWR1 chromatin remodeling complex, the INO80 chromatin remodeling complex, and of the R2TP complex.

The protein localises to the nucleus. The enzyme catalyses ATP + H2O = ADP + phosphate + H(+). In terms of biological role, DNA helicase which participates in several chromatin remodeling complexes, including the SWR1 and the INO80 complexes. The SWR1 complex mediates the ATP-dependent exchange of histone H2A for the H2A variant HZT1 leading to transcriptional regulation of selected genes by chromatin remodeling. The INO80 complex remodels chromatin by shifting nucleosomes and is involved in DNA repair. Also involved in pre-rRNA processing. The protein is RuvB-like helicase 1 (RVB1) of Eremothecium gossypii (strain ATCC 10895 / CBS 109.51 / FGSC 9923 / NRRL Y-1056) (Yeast).